We begin with the raw amino-acid sequence, 492 residues long: Coagulation factor X (492 aa).

An N-terminal signal peptide occupies residues 1 to 23; the sequence is MAGLLHLVLLSTALGGLLRPAGS. Positions 24 to 40 are excised as a propeptide; the sequence is VFLPRDQAHRVLQRARR. The region spanning 41 to 85 is the Gla domain; the sequence is ANSFLEEVKQGNLERECLEEACSLEEAREVFEDAEQTDEFWSKYK. Residues Glu46, Glu47, Glu54, Glu56, Glu59, Glu60, Glu65, Glu66, Glu69, Glu72, Glu75, and Glu79 each carry the 4-carboxyglutamate modification. Cysteines 57 and 62 form a disulfide. The EGF-like 1; calcium-binding domain occupies 86–122; it reads DGDQCEGHPCLNQGHCKDGIGDYTCTCAEGFEGKNCE. Intrachain disulfides connect Cys90–Cys101, Cys95–Cys110, Cys112–Cys121, Cys129–Cys140, Cys136–Cys149, Cys151–Cys164, Cys172–Cys341, Cys240–Cys245, Cys260–Cys276, Cys389–Cys403, and Cys414–Cys442. A (3R)-3-hydroxyaspartate modification is found at Asp103. One can recognise an EGF-like 2 domain in the interval 125–165; it reads TREICSLDNGGCDQFCREERSEVRCSCAHGYVLGDDSKSCV. Residues 183–233 constitute a propeptide, activation peptide; sequence WAIHTSEDALDASELEHYDPADLSPTESSLDLLGLNRTEPSAGEDGSQVVR. Residue Tyr200 is modified to Sulfotyrosine. Thr208 is a glycosylation site (O-linked (GalNAc...) threonine). Asn218 carries an N-linked (GlcNAc...) asparagine glycan. The Peptidase S1 domain occupies 234–466; the sequence is IVGGRDCAEG…FLKWIDKIMK (233 aa). Active-site charge relay system residues include His275 and Asp321. Catalysis depends on Ser418, which acts as the Charge relay system. A disordered region spans residues 472-492; the sequence is AGSRGHSEAPATWTVPPPLPL. Positions 476 to 492 are cleaved as a propeptide — may be removed but is not necessary for activation; that stretch reads GHSEAPATWTVPPPLPL. Thr485 is a glycosylation site (O-linked (GalNAc...) threonine).

The protein belongs to the peptidase S1 family. In terms of assembly, the two chains are formed from a single-chain precursor by the excision of two Arg residues and are held together by 1 or more disulfide bonds. Forms a heterodimer with SERPINA5. Interacts (activated) with guianensin, an anticoagulant protein from Simulium guianense saliva. Interacts (activated) with simukunin, an anticoagulant protein from Simulium vittatum saliva. In terms of processing, the vitamin K-dependent, enzymatic carboxylation of some glutamate residues allows the modified protein to bind calcium. N- and O-glycosylated. Post-translationally, proteolytically cleaved and activated by cathepsin CTSG. The activation peptide is cleaved by factor IXa (in the intrinsic pathway), or by factor VIIa (in the extrinsic pathway). In terms of processing, the iron and 2-oxoglutarate dependent 3-hydroxylation of aspartate and asparagine is (R) stereospecific within EGF domains.

The protein resides in the secreted. The catalysed reaction is Selective cleavage of Arg-|-Thr and then Arg-|-Ile bonds in prothrombin to form thrombin.. Inhibited by SERPINA5. Functionally, factor Xa is a vitamin K-dependent glycoprotein that converts prothrombin to thrombin in the presence of factor Va, calcium and phospholipid during blood clotting. Factor Xa activates pro-inflammatory and pro-fibrotic signaling pathways in a protease-activated receptor (PAR)-dependent manner. The polypeptide is Coagulation factor X (F10) (Bos taurus (Bovine)).